We begin with the raw amino-acid sequence, 344 residues long: MKFLDLCKVYIRSGAGGGGCVSFRREKYIEYGGPDGGDGGTGGSVWAEAVDGLNTLIDFRYQQHFFAKNGQPGMGRQRTGKDGDDIVLRVPVGTEILDEDQETVICDLTEVGQRVQLARGGNGGFGNLHFKSSTNQAPRRSNPGQDGVERTLWLRLKLIADVGLLGLPNAGKSTFLAATSNARPKIADYPFTTLHPNLGVVGVDNTEFVVADIPGLIEGASEGRGLGDLFLGHIERCAVLLHLFDGTSETLIEDYHTIIGELEAYGVGLADKPRITVLNKIDALDEERRAMALKQLNNVCGGGVMAMSGVAGDGVTDVLRKLRGEISDEPLRHKPVEEKEPWRP.

Residues 1–159 (MKFLDLCKVY…RTLWLRLKLI (159 aa)) enclose the Obg domain. Residues 126–146 (GNLHFKSSTNQAPRRSNPGQD) are disordered. Residues 130 to 144 (FKSSTNQAPRRSNPG) are compositionally biased toward polar residues. The OBG-type G domain maps to 160-327 (ADVGLLGLPN…VLRKLRGEIS (168 aa)). Residues 166-173 (GLPNAGKS), 191-195 (FTTLH), 212-215 (DIPG), 279-282 (NKID), and 308-310 (SGV) each bind GTP. Mg(2+)-binding residues include Ser173 and Thr193.

This sequence belongs to the TRAFAC class OBG-HflX-like GTPase superfamily. OBG GTPase family. As to quaternary structure, monomer. Mg(2+) serves as cofactor.

The protein localises to the cytoplasm. Functionally, an essential GTPase which binds GTP, GDP and possibly (p)ppGpp with moderate affinity, with high nucleotide exchange rates and a fairly low GTP hydrolysis rate. Plays a role in control of the cell cycle, stress response, ribosome biogenesis and in those bacteria that undergo differentiation, in morphogenesis control. The sequence is that of GTPase Obg from Roseobacter denitrificans (strain ATCC 33942 / OCh 114) (Erythrobacter sp. (strain OCh 114)).